The chain runs to 340 residues: Flavonoid 7-O-methyltransferase 2 (340 aa).

D207 provides a ligand contact to S-adenosyl-L-methionine. H245 acts as the Proton acceptor in catalysis.

It belongs to the class I-like SAM-binding methyltransferase superfamily. Cation-independent O-methyltransferase family. In terms of assembly, homodimer. Expressed in leaves.

It catalyses the reaction scutellarein 4'-methyl ether + S-adenosyl-L-methionine = ladanein + S-adenosyl-L-homocysteine. It carries out the reaction acacetin + S-adenosyl-L-methionine = apigenin 4',7-dimethyl ether + S-adenosyl-L-homocysteine. The enzyme catalyses diosmetin + S-adenosyl-L-methionine = luteolin 4',7-dimethyl ether + S-adenosyl-L-homocysteine. The catalysed reaction is chrysoeriol + S-adenosyl-L-methionine = velutin + S-adenosyl-L-homocysteine. It catalyses the reaction (2S)-naringenin + S-adenosyl-L-methionine = (2S)-sakuranetin + S-adenosyl-L-homocysteine + H(+). It carries out the reaction apigenin + S-adenosyl-L-methionine = genkwanin + S-adenosyl-L-homocysteine + H(+). The enzyme catalyses luteolin + S-adenosyl-L-methionine = luteolin 7-methyl ether + S-adenosyl-L-homocysteine + H(+). The catalysed reaction is scutellarein + S-adenosyl-L-methionine = scutellarein 7-methyl ether + S-adenosyl-L-homocysteine. It functions in the pathway flavonoid metabolism. Flavonoid 7-O-methyltransferase involved in the biosynthesis of polymethoxylated flavonoids natural products such as nevadensin and salvigenin, aroma compounds which contribute to the flavor of sweet basil, and exhibit pharmacological activities such as anti-allergic, anti-oxidant, antibacterial, anti-proliferative, and anti-inflammatory effects. Catalyzes S-adenosylmethionine-dependent regioselective 7-O-methylation of flavonoids; active on various hydroxylated flavonoid substrates, including apigenin (API) and luteolin (LUT), and, with a lower efficiency, scutellarein (SCU), naringenin (NAR), chrysoeriol (CHRYS), diosmetin (DIOS), acacetin (ACA) and scutellarein-7-methyl ether (SCU7Me). The polypeptide is Flavonoid 7-O-methyltransferase 2 (Ocimum basilicum (Sweet basil)).